The sequence spans 619 residues: ESX-2 secretion system protein EccA2 (619 aa).

373–380 (GPPGTGKT) is an ATP binding site.

This sequence belongs to the CbxX/CfxQ family. Part of the ESX-2 / type VII secretion system (T7SS), which is composed of cytosolic and membrane components.

The protein localises to the cytoplasm. Part of an ESX-2 / type VII specialized secretion system (T7SS), which exports several proteins. May have ATPase activity and might provide energy for the export of ESX-2 substrates. This chain is ESX-2 secretion system protein EccA2, found in Mycobacterium bovis (strain ATCC BAA-935 / AF2122/97).